A 500-amino-acid chain; its full sequence is Polyenoic fatty acid isomerase (500 aa).

The signal sequence occupies residues M1 to T21.

As to quaternary structure, homodimer. An oxidized flavin is required as a cofactor. Post-translationally, glycosylated.

It carries out the reaction (5Z,8Z,11Z,14Z,17Z)-eicosapentaenoate = (5Z,7E,9E,14Z,17Z)-icosapentaenoate. In terms of biological role, involved in the biosynthesis of conjugated triene-containing fatty acids. Catalyzes the isomerization of a wide range of substrates containing three or more methylene interrupted olefins into a Z,E,E conjugated triene functionality. May be involved in a stress tolerance mechanism as response to intertidal habitats with direct sunlight, desiccation and high temperature. In vitro substrates include arachidonic acid ((5Z,8Z,11Z,14Z)-eicosatetraenoic acid), EPA ((5Z,8Z, 11Z,14Z,17Z)-eicosapentaenoic acid), DHA ((4Z,7Z,10Z,13Z,16Z,19Z)-docosahexenoic acid), adrenic acid ((7Z,10Z,13Z,16Z)-docosatetraenoic acid), anandamide (arachidonyl-N-ethanolamide) and eicosatrienoic acid ((5Z,8Z,11Z)-eicosatrienoic acid). Gamma-linolenic acid (18:3 6Z,9Z,12Z) and dihomo-gamma-linolenic acid (20:3 8Z,11Z,14Z) are transformed into mixtures of conjugated diene and triene fatty acids, linoleic acid is only transformed to a conjugated diene. The protein is Polyenoic fatty acid isomerase of Ptilota filicina (Red alga).